A 190-amino-acid polypeptide reads, in one-letter code: GTP cyclohydrolase 1 (190 aa).

Zn(2+)-binding residues include C80, H83, and C151.

This sequence belongs to the GTP cyclohydrolase I family. In terms of assembly, toroid-shaped homodecamer, composed of two pentamers of five dimers.

The enzyme catalyses GTP + H2O = 7,8-dihydroneopterin 3'-triphosphate + formate + H(+). Its pathway is cofactor biosynthesis; 7,8-dihydroneopterin triphosphate biosynthesis; 7,8-dihydroneopterin triphosphate from GTP: step 1/1. This is GTP cyclohydrolase 1 (folE) from Rickettsia prowazekii (strain Madrid E).